Consider the following 321-residue polypeptide: D-alanine--D-alanine ligase (321 aa).

The ATP-grasp domain occupies 121–315 (RSCFLKNNIN…FTNLIEEIIK (195 aa)). Residue 148–199 (MKRPYVIKPLKQGSSIGVEVIFEEDDFHFIDYDFPYGEDIIIEQYIQGQELQ) coordinates ATP. The Mg(2+) site is built by E268, E282, and N284.

This sequence belongs to the D-alanine--D-alanine ligase family. It depends on Mg(2+) as a cofactor. Requires Mn(2+) as cofactor.

The protein resides in the cytoplasm. It catalyses the reaction 2 D-alanine + ATP = D-alanyl-D-alanine + ADP + phosphate + H(+). The protein operates within cell wall biogenesis; peptidoglycan biosynthesis. In terms of biological role, cell wall formation. This chain is D-alanine--D-alanine ligase, found in Rickettsia typhi (strain ATCC VR-144 / Wilmington).